We begin with the raw amino-acid sequence, 321 residues long: Protein ZAR1-like (321 aa).

The segment at 110–214 is disordered; the sequence is RTLSSCSPWD…GDAASEPLRR (105 aa). Basic and acidic residues predominate over residues 145–154; the sequence is LRRDGDEAES. A 3CxxC-type zinc finger spans residues 222–307; that stretch reads PKYGYFHCKD…QELCGRCKDK (86 aa).

Belongs to the ZAR1 family. Interacts with YBX2.

Its subcellular location is the cytoplasm. It is found in the cytoplasmic ribonucleoprotein granule. Functionally, mRNA-binding protein required for maternal mRNA storage, translation and degradation during oocyte maturation. Probably promotes formation of some phase-separated membraneless compartment that stores maternal mRNAs in oocytes: acts by undergoing liquid-liquid phase separation upon binding to maternal mRNAs. Binds to the 3'-UTR of maternal mRNAs, inhibiting their translation. The polypeptide is Protein ZAR1-like (Homo sapiens (Human)).